Reading from the N-terminus, the 609-residue chain is Threonine--tRNA ligase (609 aa).

Positions 1-143 (MRVLYIHAER…SFKPEGAKVE (143 aa)) are editing domain. Catalytic regions lie at residues 195–491 (PRYL…PRLP) and 196–491 (RYLD…PRLP). Residues Cys288, His339, and His460 each coordinate Zn(2+).

It belongs to the class-II aminoacyl-tRNA synthetase family. In terms of assembly, homodimer. The cofactor is Zn(2+).

It localises to the cytoplasm. The catalysed reaction is tRNA(Thr) + L-threonine + ATP = L-threonyl-tRNA(Thr) + AMP + diphosphate + H(+). Functionally, catalyzes the attachment of threonine to tRNA(Thr) in a two-step reaction: L-threonine is first activated by ATP to form Thr-AMP and then transferred to the acceptor end of tRNA(Thr). Also edits incorrectly charged L-seryl-tRNA(Thr). The polypeptide is Threonine--tRNA ligase (Pyrobaculum islandicum (strain DSM 4184 / JCM 9189 / GEO3)).